Here is a 410-residue protein sequence, read N- to C-terminus: Mating-type locus allele B1 protein (410 aa).

Positions 1 to 110 (MSSDPNFSLI…FNVVSPDVGC (110 aa)) are variable domain between B alleles. Positions 107 to 184 (DVGCRNLSED…NARRRSGWSH (78 aa)) form a DNA-binding region, homeobox; TALE-type. The tract at residues 111 to 410 (RNLSEDLPAY…PFLCLSVAFV (300 aa)) is highly conserved between B alleles. Disordered regions lie at residues 202–239 (RAKLSSSNQSTPPSSTSDSLSNNLDDVLSDNLGRPLTP), 278–335 (TPKP…TPEL), and 374–395 (ARGNRKVKALPKRAGKQQPDEV). The span at 205-233 (LSSSNQSTPPSSTSDSLSNNLDDVLSDNL) shows a compositional bias: low complexity. Positions 276–308 (KKTPKPGMPRPVTTVAKRHPARKTKPAAKPKSR) match the Nuclear localization signal motif. Positions 291–307 (AKRHPARKTKPAAKPKS) are enriched in basic residues. A compositionally biased stretch (polar residues) spans 312 to 335 (PRASTTPSIDSTLDSSKLESTPEL). Residues 333–410 (PELSMCSTAD…PFLCLSVAFV (78 aa)) are not essential for B1 function. The segment covering 375–388 (RGNRKVKALPKRAG) has biased composition (basic residues).

Belongs to the TALE/M-ATYP homeobox family.

Its subcellular location is the nucleus. In terms of biological role, the B locus has at least 25 alleles, and any combination of two different B alleles yields a multimeric regulatory protein, that activates genes responsible for the pathogenicity and for the sexual development of the fungus within the corn plant. This chain is Mating-type locus allele B1 protein, found in Mycosarcoma maydis (Corn smut fungus).